A 199-amino-acid chain; its full sequence is GQGSLAYPGLRTQGNLETLSGPNDATRGLTSLADTFEHVIEELLDEQQVIQPSKENKDADLYSTRVMLSSQVPLEPPLLFLLEEYKNYLDAANMSMRVRRHSDPARRGELSVCDSTSEWVTAAEKKTAVDMSGATVTVLEKVPVPKGQLKQYFYETKCSSKGYAKEGCRGIDKRYWNSQCRTTQSFVRALTMDNKKRVG.

Residues 1 to 23 (GQGSLAYPGLRTQGNLETLSGPN) form a disordered region. Positions 1–100 (GQGSLAYPGL…AANMSMRVRR (100 aa)) are excised as a propeptide. Over residues 12-23 (TQGNLETLSGPN) the composition is skewed to polar residues. N-linked (GlcNAc...) asparagine glycosylation is present at Asn93. Cys113 and Cys180 are oxidised to a cystine.

Belongs to the NGF-beta family.

It localises to the secreted. In terms of biological role, promotes the survival of neuronal populations that are all located either in the central nervous system or directly connected to it. The protein is Neurotrophic factor BDNF precursor form (BDNF) of Eunectes notaeus (Yellow anaconda).